Consider the following 134-residue polypeptide: Profilin-3 (134 aa).

A disulfide bridge links cysteine 13 with cysteine 118. An Involved in PIP2 interaction motif is present at residues 84 to 100 (AVIRGKKGSGGITIKKT). Residue threonine 114 is modified to Phosphothreonine.

Belongs to the profilin family. Occurs in many kinds of cells as a complex with monomeric actin in a 1:1 ratio. Phosphorylated by MAP kinases.

It localises to the cytoplasm. Its subcellular location is the cytoskeleton. Binds to actin and affects the structure of the cytoskeleton. At high concentrations, profilin prevents the polymerization of actin, whereas it enhances it at low concentrations. The chain is Profilin-3 from Olea europaea (Common olive).